A 566-amino-acid chain; its full sequence is Bacillolysin (566 aa).

The signal sequence occupies residues Met-1–Ala-27. A propeptide spans Asp-28 to Pro-249 (activation peptide). Ca(2+) contacts are provided by Asp-307, Asp-309, Val-311, and Asp-388. His-392 lines the Zn(2+) pocket. Residue Glu-393 is part of the active site. 2 residues coordinate Zn(2+): His-396 and Glu-416. Ca(2+) is bound by residues Glu-427, Asn-433, Asp-435, Glu-437, Glu-440, Tyr-443, Thr-444, Lys-447, and Asp-450. His-481 acts as the Proton donor in catalysis.

It belongs to the peptidase M4 family. Ca(2+) serves as cofactor. The cofactor is Zn(2+).

It is found in the secreted. The enzyme catalyses Similar, but not identical, to that of thermolysin.. In terms of biological role, extracellular zinc metalloprotease. This chain is Bacillolysin (npr), found in Bacillus cereus.